Reading from the N-terminus, the 55-residue chain is Large ribosomal subunit protein bL33 (55 aa).

This sequence belongs to the bacterial ribosomal protein bL33 family.

The sequence is that of Large ribosomal subunit protein bL33 from Dehalococcoides mccartyi (strain ATCC BAA-2100 / JCM 16839 / KCTC 5957 / BAV1).